We begin with the raw amino-acid sequence, 113 residues long: Small ribosomal subunit protein bS6 (113 aa).

The protein belongs to the bacterial ribosomal protein bS6 family.

In terms of biological role, binds together with bS18 to 16S ribosomal RNA. The chain is Small ribosomal subunit protein bS6 (rpsF) from Buchnera aphidicola subsp. Acyrthosiphon pisum (strain APS) (Acyrthosiphon pisum symbiotic bacterium).